Reading from the N-terminus, the 310-residue chain is Carbamate kinase 1 (310 aa).

Homodimer (predominantly) and homotetramer.

It localises to the cytoplasm. The enzyme catalyses hydrogencarbonate + NH4(+) + ATP = carbamoyl phosphate + ADP + H2O + H(+). It participates in metabolic intermediate metabolism; carbamoyl phosphate degradation; CO(2) and NH(3) from carbamoyl phosphate: step 1/1. Inhibited by adenosine(5')pentaphospho(5')adenosine (Ap5A), Ap6A and to a much lower extent by Ap4A. Functionally, catalyzes the reversible synthesis of carbamate and ATP from carbamoyl phosphate and ADP. Can also catalyze, although with low efficiency, the phosphorylation of bicarbonate, leading to the formation of carboxyphosphate, an unstable intermediate found in the reactions catalyzed by carbamoyl-phosphate synthase and biotin carboxylase. Can also use acetate. This Enterococcus faecium (Streptococcus faecium) protein is Carbamate kinase 1 (arcC1).